The sequence spans 449 residues: Anther-specific proline-rich protein APG (449 aa).

The span at 1–118 (PPKPQPKPPP…KPPAPSPPKP (118 aa)) shows a compositional bias: pro residues. Residues 1 to 123 (PPKPQPKPPP…SPPKPQNKTI (123 aa)) are disordered. Catalysis depends on Ser132, which acts as the Nucleophile. Residues Asp425 and His428 contribute to the active site.

Belongs to the 'GDSL' lipolytic enzyme family. In terms of tissue distribution, found in anther, only in male fertile plants.

This Brassica napus (Rape) protein is Anther-specific proline-rich protein APG (APG).